A 332-amino-acid chain; its full sequence is Ribosomal RNA small subunit methyltransferase H (332 aa).

Residues 38-40 (GGY), Asp56, Phe83, Asp104, and Gln111 each bind S-adenosyl-L-methionine. The segment at 309–332 (TETPFSEDISRPDTHIPRSRRQSA) is disordered.

This sequence belongs to the methyltransferase superfamily. RsmH family.

Its subcellular location is the cytoplasm. It catalyses the reaction cytidine(1402) in 16S rRNA + S-adenosyl-L-methionine = N(4)-methylcytidine(1402) in 16S rRNA + S-adenosyl-L-homocysteine + H(+). In terms of biological role, specifically methylates the N4 position of cytidine in position 1402 (C1402) of 16S rRNA. This chain is Ribosomal RNA small subunit methyltransferase H, found in Zymomonas mobilis subsp. mobilis (strain ATCC 31821 / ZM4 / CP4).